The primary structure comprises 391 residues: MSLNPRDVVIVDFGRTPMGRSKGGMHRNTRAEDMSAHLISKLLERNGKVDPKEVEDVIWGCVNQTLEQGWNIARMASLMTPIPHTSAAQTVSRLCGSSMSALHTAAQAIMTGNGDVFVVGGVEHMGHVSMMHGVDPNPHLSLHAAKASGMMGLTAEMLGKMHGITREQQDLFGLRSHQLAHKATVEGKFKDEIIPMQGYDENGFLKVFDFDETIRPETTLEGLASLKPAFNPKGGTVTAGTSSQITDGASCMIVMSGQRAMDLGIQPLAVIRSMAVAGVDPAIMGYGPVPSTQKALKRAGLTMADIDFIELNEAFAAQALPVLKDLKVLDKMDEKVNLHGGAIALGHPFGCSGARISGTLLNVMKQNGGTLGVATMCVGLGQGITTVFERV.

Cys-95 serves as the catalytic Acyl-thioester intermediate. Active-site proton acceptor residues include His-347 and Cys-377.

The protein belongs to the thiolase-like superfamily. Thiolase family. Heterotetramer of two alpha chains (FadB) and two beta chains (FadA).

Its subcellular location is the cytoplasm. It carries out the reaction an acyl-CoA + acetyl-CoA = a 3-oxoacyl-CoA + CoA. It functions in the pathway lipid metabolism; fatty acid beta-oxidation. Its function is as follows. Catalyzes the final step of fatty acid oxidation in which acetyl-CoA is released and the CoA ester of a fatty acid two carbons shorter is formed. In Pseudomonas putida (strain ATCC 47054 / DSM 6125 / CFBP 8728 / NCIMB 11950 / KT2440), this protein is 3-ketoacyl-CoA thiolase.